We begin with the raw amino-acid sequence, 191 residues long: Peptide methionine sulfoxide reductase MsrA (191 aa).

The active site involves Cys21.

It belongs to the MsrA Met sulfoxide reductase family.

The catalysed reaction is L-methionyl-[protein] + [thioredoxin]-disulfide + H2O = L-methionyl-(S)-S-oxide-[protein] + [thioredoxin]-dithiol. It carries out the reaction [thioredoxin]-disulfide + L-methionine + H2O = L-methionine (S)-S-oxide + [thioredoxin]-dithiol. Functionally, has an important function as a repair enzyme for proteins that have been inactivated by oxidation. Catalyzes the reversible oxidation-reduction of methionine sulfoxide in proteins to methionine. This Ralstonia nicotianae (strain ATCC BAA-1114 / GMI1000) (Ralstonia solanacearum) protein is Peptide methionine sulfoxide reductase MsrA.